The following is a 129-amino-acid chain: Large ribosomal subunit protein bL20 (129 aa).

The protein belongs to the bacterial ribosomal protein bL20 family.

Functionally, binds directly to 23S ribosomal RNA and is necessary for the in vitro assembly process of the 50S ribosomal subunit. It is not involved in the protein synthesizing functions of that subunit. In Kineococcus radiotolerans (strain ATCC BAA-149 / DSM 14245 / SRS30216), this protein is Large ribosomal subunit protein bL20.